Reading from the N-terminus, the 260-residue chain is 14-3-3-like protein (260 aa).

Positions 240-260 (DMQDDGGDEIKEAAPKPDEQY) are disordered. Residues 247 to 260 (DEIKEAAPKPDEQY) show a composition bias toward basic and acidic residues.

It belongs to the 14-3-3 family.

The sequence is that of 14-3-3-like protein from Oenothera elata subsp. hookeri (Hooker's evening primrose).